A 701-amino-acid chain; its full sequence is Sulfate anion transporter 1 (701 aa).

Residues 1–20 are disordered; that stretch reads MDESPEPLQQGRGPVPVRRQ. 2 consecutive transmembrane segments (helical) span residues 68 to 90 and 94 to 116; these read YLAG…AIAY and AGLQ…FLMG. N-linked (GlcNAc...) asparagine glycosylation is found at Asn158 and Asn163. The next 7 membrane-spanning stretches (helical) occupy residues 176 to 198, 255 to 277, 290 to 309, 342 to 364, 377 to 399, 412 to 434, and 472 to 494; these read YAIR…MGVL, GAGQ…LLAA, VPLP…SHFG, ALDA…EMFA, LLAV…SAAL, TQLS…APLF, and LVWA…LAGV. One can recognise an STAS domain in the interval 527-687; it reads EFEGLVPEPG…LSVHDAVQTA (161 aa).

It belongs to the SLC26A/SulP transporter (TC 2.A.53) family. As to expression, expressed most abundantly in the kidney and liver, with lower levels in the pancreas, testis, brain, small intestine, colon, and lung.

The protein resides in the cell membrane. It localises to the basolateral cell membrane. It carries out the reaction thiosulfate(in) + sulfate(out) = thiosulfate(out) + sulfate(in). The catalysed reaction is 2 hydrogencarbonate(out) + sulfate(in) = 2 hydrogencarbonate(in) + sulfate(out). It catalyses the reaction oxalate(in) + sulfate(out) = oxalate(out) + sulfate(in). The enzyme catalyses oxalate(in) + 2 hydrogencarbonate(out) = oxalate(out) + 2 hydrogencarbonate(in). In terms of biological role, sodium-independent sulfate anion transporter. Can transport other anions including bicarbonate, thiosulfate and oxalate by mediating sulfate-thiosulfate, sulfate-hydrogencarbonate and sulfate-oxalate anion exchange. Mediates oxalate-hydrogencarbonate anion exchange. This Homo sapiens (Human) protein is Sulfate anion transporter 1 (SLC26A1).